The following is a 400-amino-acid chain: Homoserine O-acetyltransferase (400 aa).

Residues Met-1–Ala-11 are compositionally biased toward polar residues. Positions Met-1 to Pro-24 are disordered. Basic and acidic residues predominate over residues His-13–His-23. An AB hydrolase-1 domain is found at Asn-64–Leu-373. Ser-169 acts as the Nucleophile in catalysis. Arg-239 contacts substrate. Residues Asp-335 and His-368 contribute to the active site. Asp-369 contributes to the substrate binding site.

The protein belongs to the AB hydrolase superfamily. MetX family. As to quaternary structure, homodimer.

It localises to the cytoplasm. The enzyme catalyses L-homoserine + acetyl-CoA = O-acetyl-L-homoserine + CoA. It functions in the pathway amino-acid biosynthesis; L-methionine biosynthesis via de novo pathway; O-acetyl-L-homoserine from L-homoserine: step 1/1. Transfers an acetyl group from acetyl-CoA to L-homoserine, forming acetyl-L-homoserine. In Rhodopseudomonas palustris (strain BisB18), this protein is Homoserine O-acetyltransferase.